The following is a 140-amino-acid chain: Putative nickel-responsive regulator (140 aa).

Residues His81, His92, His94, and Cys100 each contribute to the Ni(2+) site.

Belongs to the transcriptional regulatory CopG/NikR family. It depends on Ni(2+) as a cofactor.

In terms of biological role, transcriptional regulator. The sequence is that of Putative nickel-responsive regulator from Methanothrix thermoacetophila (strain DSM 6194 / JCM 14653 / NBRC 101360 / PT) (Methanosaeta thermophila).